Reading from the N-terminus, the 88-residue chain is Small ribosomal subunit protein bS20 (88 aa).

The segment at 1 to 33 (MANTSSAKKATRKIARRTAVNKSRRTQMRGSVR) is disordered.

This sequence belongs to the bacterial ribosomal protein bS20 family.

Its function is as follows. Binds directly to 16S ribosomal RNA. The chain is Small ribosomal subunit protein bS20 from Rhodopseudomonas palustris (strain BisB5).